The chain runs to 1142 residues: Enamelin (1142 aa).

The first 38 residues, 1–38, serve as a signal peptide directing secretion; sequence MLLSCRHGASSPKLDNLVPSGKMKILLVFLGLLCYSAA. Ser53 is subject to Phosphoserine. Disordered stretches follow at residues 90–347, 374–513, 543–587, and 603–662; these read YQMP…FYRN, YRRV…IIPK, TEGI…LSHG, and RENS…FPGQ. The segment covering 128-148 has biased composition (pro residues); sequence QPQPKTPTPKQPLNEPSPTPT. Phosphoserine occurs at positions 191 and 216. A compositionally biased stretch (basic and acidic residues) spans 223–234; that stretch reads DFEKPKEKDPPK. Composition is skewed to polar residues over residues 243–303 and 381–395; these read SVNT…SQSP and TARS…NSAN. Residues Asn245, Asn252, Asn264, and Asn291 are each glycosylated (N-linked (GlcNAc...) asparagine). A propeptide spanning residues 277–514 is cleaved from the precursor; it reads NPRSNPTGQN…QTQTQIIPKG (238 aa). Residues 431-442 show a composition bias toward basic and acidic residues; sequence PREKQVSQKERT. Residues 453 to 467 show a composition bias toward polar residues; the sequence is WRNSQDYGINKSNYK. Asn462 is a glycosylation site (N-linked (GlcNAc...) asparagine). Hydroxyproline is present on Pro547. Residues 570–582 are compositionally biased toward basic and acidic residues; it reads FKEDPGRQEEHLP. Positions 666-669 are excised as a propeptide; the sequence is DMEE. Residues 787–816 show a composition bias toward polar residues; the sequence is NLYKTPTSSPHQKENQPYSNNSPAGLQKNP. Disordered stretches follow at residues 787–820, 921–965, and 1020–1049; these read NLYK…TWHE, TSIV…SQLS, and VFGT…QQRQ. N-linked (GlcNAc...) asparagine glycosylation is present at Asn929. Over residues 952 to 965 the composition is skewed to polar residues; the sequence is LRRSTPCSVKSQLS. Asn1040 is a glycosylation site (N-linked (GlcNAc...) asparagine).

Post-translationally, proteolytically cleaved into several smaller polypeptides. Cleavage of N-terminal region of enamelin occurs soon after secretion. In terms of processing, phosphorylated by FAM20C in vitro. As to expression, expressed by secretory-phase ameloblasts. Intact enamelin and large-molecular-weight enamelins are limited to the most superficial layer of the developing enamel matrix, while low-molecular-weight enamelins are observed in deeper enamelin. Preferential localization among the crystallites in rod and interrod enamel.

It localises to the secreted. The protein resides in the extracellular space. The protein localises to the extracellular matrix. Its function is as follows. Involved in the mineralization and structural organization of enamel. Involved in the extension of enamel during the secretory stage of dental enamel formation. In Sus scrofa (Pig), this protein is Enamelin (ENAM).